Here is a 130-residue protein sequence, read N- to C-terminus: Small ribosomal subunit protein uS9 (130 aa).

Belongs to the universal ribosomal protein uS9 family.

This Pectobacterium atrosepticum (strain SCRI 1043 / ATCC BAA-672) (Erwinia carotovora subsp. atroseptica) protein is Small ribosomal subunit protein uS9.